We begin with the raw amino-acid sequence, 405 residues long: Probable succinyl-diaminopimelate desuccinylase (405 aa).

Residue His72 coordinates Zn(2+). Residue Asp74 is part of the active site. Asp105 is a Zn(2+) binding site. Glu139 serves as the catalytic Proton acceptor. Zn(2+) is bound by residues Glu140, Glu165, and His377.

Belongs to the peptidase M20A family. It depends on Zn(2+) as a cofactor. Requires Co(2+) as cofactor.

It catalyses the reaction N-succinyl-(2S,6S)-2,6-diaminopimelate + H2O = (2S,6S)-2,6-diaminopimelate + succinate. The protein operates within amino-acid biosynthesis; L-lysine biosynthesis via DAP pathway; LL-2,6-diaminopimelate from (S)-tetrahydrodipicolinate (succinylase route): step 3/3. The polypeptide is Probable succinyl-diaminopimelate desuccinylase (dapE) (Staphylococcus epidermidis (strain ATCC 35984 / DSM 28319 / BCRC 17069 / CCUG 31568 / BM 3577 / RP62A)).